A 624-amino-acid chain; its full sequence is MDEQHSLRIAALAGEILTRDRAQVNTIIHSPERALGQKLDAITALVDSMQPGTPRDAAVNEAANVTAQSPMSETQDPQRANDNVSDTVANENAQNLLLEGQDRVLRHRVLQIAVTFLQRNKRVKANATTLAQIEEALRNYETAKNSGASDSVIDGFLERAESLFNTLKNISLSELLDRESAVFADTESAPRTQTADNSPPPVSEQDFDRLDISQLTDYIENNYRDQFDFDKHNSVEDVRNFAKNLWRNKTRVTSTPLQEYQMPPQTPAPLQDQMPPQTPAYATPAQQPSQPTPAQTPAQQPSQPTPAYVTSAQTPAQQPSQPTPVSNYSWERRVASMFANTDLPQNVPLPDSYDTSSVIGQKRRKRRAPPLPPYSSDEEDAAPPRSPKRKESLSSSEEDEFDYEREQKRRREEDKNFLRLKALELSKYAGVNERMEKIVRVTKAMQQTYDYCNCKNTISGTPAAASFINLLRRLNTYNLSHVEMTVNFYELLYPLTLYNDESNRIVGYIFAATNYFQNCAKNFGRMRAEFNEHGPFAQIDSLVMFVIKFNFLCDLQTFFGKIDGLPMLAQPNIKTHTVLVMRDKIVKLAFGALQYDTSLKTDNRRDPKHLQRLIQLMNADFNIM.

3 disordered regions span residues 183-208 (FADT…QDFD), 254-326 (STPL…TPVS), and 341-410 (TDLP…QKRR). Residues 256–268 (PLQEYQMPPQTPA) form an A-1 repeat. Residues 256 to 280 (PLQEYQMPPQTPAPLQDQMPPQTPA) form a 2 X 13 AA tandem repeats, motif A region. Residues 269-280 (PLQDQMPPQTPA) form an A-2 repeat. Residues 279–324 (PAYATPAQQPSQPTPAQTPAQQPSQPTPAYVTSAQTPAQQPSQPTP) are compositionally biased toward low complexity. A B-1 repeat occupies 283–293 (TPAQQPSQPTP). The tract at residues 283 to 324 (TPAQQPSQPTPAQTPAQQPSQPTPAYVTSAQTPAQQPSQPTP) is 3 X 11 AA repeats, motif B. The stretch at 296–306 (TPAQQPSQPTP) is one B-2 repeat. The B-3 repeat unit spans residues 314–324 (TPAQQPSQPTP).

Its subcellular location is the virion. The protein is Capsid protein p87 (P87) of Orgyia pseudotsugata multicapsid polyhedrosis virus (OpMNPV).